The following is a 535-amino-acid chain: Pentatricopeptide repeat-containing protein At5g16420, mitochondrial (535 aa).

Residues 1 to 28 constitute a mitochondrion transit peptide; it reads MFLSRVNPTRFPPFVASRRLFSASASAA. PPR repeat units follow at residues 82 to 112, 119 to 153, 154 to 189, 190 to 224, 225 to 259, 260 to 294, 295 to 329, 330 to 364, 365 to 395, 399 to 433, 434 to 468, and 469 to 503; these read NYDT…LRNS, GENL…GVKR, SVRS…GITP, NIFT…GLVP, NLVT…GWYP, DATT…EIEP, NEVT…SFMP, DSSL…NCMP, DNAL…FEKG, SLLT…KCKP, NAFT…GCFP, and NKTT…GKVD.

This sequence belongs to the PPR family. P subfamily.

The protein resides in the mitochondrion. In Arabidopsis thaliana (Mouse-ear cress), this protein is Pentatricopeptide repeat-containing protein At5g16420, mitochondrial.